A 93-amino-acid chain; its full sequence is N-myc protein (93 aa).

Efficient DNA binding requires dimerization with another bHLH protein. Binds DNA as a heterodimer with MAX. Barely detectable in most tissues assayed.

It is found in the nucleus. Functionally, may function as a transcription factor. In Danio rerio (Zebrafish), this protein is N-myc protein (mycn).